A 951-amino-acid polypeptide reads, in one-letter code: Serine/threonine-protein phosphatase 4 regulatory subunit 1 (951 aa).

HEAT repeat units lie at residues Glu26 to Arg63, Arg82 to Glu119, Ala127 to Ile164, Asp168 to Lys206, Ile208 to Gln246, Ala248 to Gln285, and Ile287 to Asn324. Disordered regions lie at residues Ser326–Val395, Ser407–Arg501, His539–Glu569, and Gly592–Pro612. Basic and acidic residues-rich tracts occupy residues Phe332–Asp360, Asp464–Gly483, and His539–Leu551. Residues Lys502–His539 form an HEAT 8 repeat. Gly residues predominate over residues Ala594–Phe604. HEAT repeat units lie at residues Leu699–Ile735, Arg777–Met815, Thr820–Leu858, and Gln862–Tyr899. Ser936 is modified (phosphoserine).

In terms of assembly, serine/threonine-protein phosphatase 4 (PP4) occurs in different assemblies of the catalytic and one or more regulatory subunits. Component of the PP4 complex PPP4C-PPP4R1. Interacts with HDAC3.

In terms of biological role, regulatory subunit of serine/threonine-protein phosphatase 4. May play a role in regulation of cell division in renal glomeruli. The PPP4C-PPP4R1 PP4 complex may play a role in dephosphorylation and regulation of HDAC3. Plays a role in the inhibition of TNF-induced NF-kappa-B activation by regulating the dephosphorylation of TRAF2. The protein is Serine/threonine-protein phosphatase 4 regulatory subunit 1 (Ppp4r1) of Rattus norvegicus (Rat).